A 430-amino-acid chain; its full sequence is Glutamate-1-semialdehyde 2,1-aminomutase (430 aa).

K267 bears the N6-(pyridoxal phosphate)lysine mark.

Belongs to the class-III pyridoxal-phosphate-dependent aminotransferase family. HemL subfamily. Homodimer. Pyridoxal 5'-phosphate serves as cofactor.

The protein resides in the cytoplasm. The catalysed reaction is (S)-4-amino-5-oxopentanoate = 5-aminolevulinate. The protein operates within porphyrin-containing compound metabolism; protoporphyrin-IX biosynthesis; 5-aminolevulinate from L-glutamyl-tRNA(Glu): step 2/2. This chain is Glutamate-1-semialdehyde 2,1-aminomutase, found in Anaeromyxobacter sp. (strain K).